The sequence spans 567 residues: PCNA-interacting partner (567 aa).

A disordered region spans residues 485-552 (IDLKTAEQVK…GVSRNKASKN (68 aa)). Composition is skewed to polar residues over residues 512–524 (DIQSETTNGQENE) and 534–552 (LTSSKANKQGVSRNKASKN).

This sequence belongs to the PARI family.

It localises to the cytoplasm. The protein localises to the nucleus. Functionally, required to suppress inappropriate homologous recombination, thereby playing a central role DNA repair and in the maintenance of genomic stability. The polypeptide is PCNA-interacting partner (parpbp) (Xenopus laevis (African clawed frog)).